Consider the following 402-residue polypeptide: UDP-N-acetylmuramoylalanine--D-glutamate ligase (402 aa).

97-103 (GTNGKTT) contributes to the ATP binding site.

Belongs to the MurCDEF family.

Its subcellular location is the cytoplasm. The enzyme catalyses UDP-N-acetyl-alpha-D-muramoyl-L-alanine + D-glutamate + ATP = UDP-N-acetyl-alpha-D-muramoyl-L-alanyl-D-glutamate + ADP + phosphate + H(+). It participates in cell wall biogenesis; peptidoglycan biosynthesis. Its function is as follows. Cell wall formation. Catalyzes the addition of glutamate to the nucleotide precursor UDP-N-acetylmuramoyl-L-alanine (UMA). The chain is UDP-N-acetylmuramoylalanine--D-glutamate ligase from Campylobacter jejuni (strain RM1221).